Reading from the N-terminus, the 399-residue chain is Formate-dependent phosphoribosylglycinamide formyltransferase (399 aa).

N(1)-(5-phospho-beta-D-ribosyl)glycinamide contacts are provided by residues 21–22 (EL) and Glu-81. Residues Arg-114, Lys-156, 161–166 (SSGKGQ), 196–199 (EGFI), and Glu-204 each bind ATP. The 196-residue stretch at 119 to 314 (RLAAEELGLP…EFELHARAIL (196 aa)) folds into the ATP-grasp domain. The Mg(2+) site is built by Glu-273 and Glu-285. N(1)-(5-phospho-beta-D-ribosyl)glycinamide contacts are provided by residues Asp-292, Lys-361, and 368-369 (RR). Residues 370 to 399 (MGVAVANGESTDQARERAKLAASKVRPTRT) form a disordered region.

This sequence belongs to the PurK/PurT family. In terms of assembly, homodimer.

The enzyme catalyses N(1)-(5-phospho-beta-D-ribosyl)glycinamide + formate + ATP = N(2)-formyl-N(1)-(5-phospho-beta-D-ribosyl)glycinamide + ADP + phosphate + H(+). It participates in purine metabolism; IMP biosynthesis via de novo pathway; N(2)-formyl-N(1)-(5-phospho-D-ribosyl)glycinamide from N(1)-(5-phospho-D-ribosyl)glycinamide (formate route): step 1/1. Functionally, involved in the de novo purine biosynthesis. Catalyzes the transfer of formate to 5-phospho-ribosyl-glycinamide (GAR), producing 5-phospho-ribosyl-N-formylglycinamide (FGAR). Formate is provided by PurU via hydrolysis of 10-formyl-tetrahydrofolate. The chain is Formate-dependent phosphoribosylglycinamide formyltransferase from Dechloromonas aromatica (strain RCB).